Consider the following 422-residue polypeptide: Dihydroorotase (422 aa).

Histidine 53 and histidine 55 together coordinate Zn(2+). Residues 55–57 (HFR) and asparagine 87 contribute to the substrate site. Positions 138, 172, 223, and 291 each coordinate Zn(2+). Residue aspartate 291 is part of the active site. Histidine 295 provides a ligand contact to substrate.

This sequence belongs to the metallo-dependent hydrolases superfamily. DHOase family. Class I DHOase subfamily. Requires Zn(2+) as cofactor.

The enzyme catalyses (S)-dihydroorotate + H2O = N-carbamoyl-L-aspartate + H(+). It functions in the pathway pyrimidine metabolism; UMP biosynthesis via de novo pathway; (S)-dihydroorotate from bicarbonate: step 3/3. Its function is as follows. Catalyzes the reversible cyclization of carbamoyl aspartate to dihydroorotate. This is Dihydroorotase from Halobacterium salinarum (strain ATCC 700922 / JCM 11081 / NRC-1) (Halobacterium halobium).